The primary structure comprises 493 residues: MIVIQLLIAASLILWIRFLWSRRKLYMLMMQLPGRMGLPLLGNSVRYLIISRGRMSSRTTYMDKHGSTYMAWIGTTPIVITRDPKIAEKVLTSPFCINRSSQTTNALALSMGYGLLTLQGSKWMARRKHMNPAFKHSVLLSFLPIFNAETDLLVSVFDSFVGQGEKDVLSDLIRWSFAIATQTTLGTDVTKDDNFENDAILKTYQSMLRLTIINIFVPFVQNKIVSKLFGLEWLRRRDASAINKMINNILDKKLNSNPENYCESELKTVIHRAIELFRNDEMSLMELGAECSSMVLAAFETSAHTVYYALVLLAMFPEHQEMVFNEIKEHFPLAKGIEVTHTDLQQLVYLDRVLNETLRLMPSVPFSSRETLEDLRLSNGVVIPKGMTISIDIFNTQRNTDYWGSEAAQFNPENFLPEKIHDRHPYAFIPFSKGKRNCIGWRYGLMSSKLALVKILRNYKLKTSFPYENLEFVDHMVIKLAQSPQLAFERRTL.

C438 contributes to the heme binding site.

This sequence belongs to the cytochrome P450 family. Requires heme as cofactor.

Its subcellular location is the endoplasmic reticulum membrane. The protein resides in the microsome membrane. May be involved in the metabolism of insect hormones and in the breakdown of synthetic insecticides. The protein is Probable cytochrome P450 313a2 (Cyp313a2) of Drosophila melanogaster (Fruit fly).